Reading from the N-terminus, the 522-residue chain is Signal transduction histidine-protein kinase/phosphatase MprB (522 aa).

Topologically, residues 1 to 30 (MIRLHRPQRPPLRAPLRATPSLSLRWRVML) are cytoplasmic. Residues 31–51 (LAMSMVAMVVVLMAFAVYAVI) traverse the membrane as a helical segment. Residues 52 to 167 (SAALYSDIDN…PTEAVMNKLR (116 aa)) are Extracellular-facing. The chain crosses the membrane as a helical span at residues 168–188 (WVLLIVGGVGVAVAAVAGGMV). The Cytoplasmic segment spans residues 189–522 (TRAGLRPVAR…SVDSQSARAR (334 aa)). The HAMP domain occupies 190-242 (RAGLRPVARLTEAAERVARTDDLRPIPVFGSDELARLTESFNLMLRALAESRE). Residues 250-470 (DAGHELRTPL…SFYVLLPGRP (221 aa)) form the Histidine kinase domain. His-253 bears the Phosphohistidine; by autocatalysis mark. Residues 468–522 (GRPLPPAGHSTPAGESETDKAEAATDPAVPVAGDTANSRESANVISVDSQSARAR) form a disordered region. The span at 502-522 (TANSRESANVISVDSQSARAR) shows a compositional bias: polar residues.

Mg(2+) is required as a cofactor. It depends on Mn(2+) as a cofactor. Autophosphorylated.

It localises to the cell membrane. The enzyme catalyses ATP + protein L-histidine = ADP + protein N-phospho-L-histidine.. In terms of biological role, member of the two-component regulatory system MprB/MprA which contributes to maintaining a balance among several systems involved in stress resistance and is required for establishment and maintenance of persistent infection in the host. In response to environmental signals MprB acts both as a membrane-associated protein kinase that undergoes autophosphorylation and subsequently transfers the phosphate to MprA, and a protein phosphatase that dephosphorylates phospho-MprA. The polypeptide is Signal transduction histidine-protein kinase/phosphatase MprB (mprB) (Mycobacterium avium (strain 104)).